Consider the following 107-residue polypeptide: Iron-binding protein IscA (107 aa).

Cys35, Cys99, and Cys101 together coordinate Fe cation.

Belongs to the HesB/IscA family. As to quaternary structure, homodimer; may form tetramers and higher multimers. Fe cation serves as cofactor.

Is able to transfer iron-sulfur clusters to apo-ferredoxin. Multiple cycles of [2Fe2S] cluster formation and transfer are observed, suggesting that IscA acts catalytically. Recruits intracellular free iron so as to provide iron for the assembly of transient iron-sulfur cluster in IscU in the presence of IscS, L-cysteine and the thioredoxin reductase system TrxA/TrxB. The sequence is that of Iron-binding protein IscA from Proteus mirabilis (strain HI4320).